The chain runs to 367 residues: Peptide chain release factor 2 (367 aa).

Glutamine 254 carries the post-translational modification N5-methylglutamine.

The protein belongs to the prokaryotic/mitochondrial release factor family. Methylated by PrmC. Methylation increases the termination efficiency of RF2.

It is found in the cytoplasm. Its function is as follows. Peptide chain release factor 2 directs the termination of translation in response to the peptide chain termination codons UGA and UAA. The protein is Peptide chain release factor 2 of Neisseria meningitidis serogroup B (strain ATCC BAA-335 / MC58).